A 258-amino-acid chain; its full sequence is Trans-aconitate 2-methyltransferase (258 aa).

Belongs to the methyltransferase superfamily. Tam family.

The protein resides in the cytoplasm. The catalysed reaction is trans-aconitate + S-adenosyl-L-methionine = (E)-3-(methoxycarbonyl)pent-2-enedioate + S-adenosyl-L-homocysteine. Functionally, catalyzes the S-adenosylmethionine monomethyl esterification of trans-aconitate. This Methylobacterium nodulans (strain LMG 21967 / CNCM I-2342 / ORS 2060) protein is Trans-aconitate 2-methyltransferase.